A 546-amino-acid chain; its full sequence is Thermolysin (546 aa).

The N-terminal stretch at 1 to 25 (MNKRAMLGAIGLAFGLMAWPFGASA) is a signal peptide. The propeptide at 26 to 228 (KEKSMVWNEQ…EAKPGGGQPV (203 aa)) is activation peptide. The Ca(2+) site is built by Asp287, Asp289, Gln291, and Asp368. Position 372 (His372) interacts with Zn(2+). Residue Glu373 is part of the active site. 2 residues coordinate Zn(2+): His376 and Glu396. Positions 407, 413, 415, 417, 420, 423, 424, 427, and 430 each coordinate Ca(2+). The Proton donor role is filled by His461.

The protein belongs to the peptidase M4 family. The cofactor is Ca(2+). Requires Zn(2+) as cofactor.

The protein localises to the secreted. The enzyme catalyses Preferential cleavage: Xaa-|-Leu &gt; Xaa-|-Phe.. Functionally, extracellular zinc metalloprotease. This chain is Thermolysin, found in Alicyclobacillus acidocaldarius subsp. acidocaldarius (Bacillus acidocaldarius).